The sequence spans 223 residues: MVSTNPPVLPISTTATDTTNQPPIVTAVVESQPPVVRAFVNGVTETVCGGLSRSRPWSELLDRSAFTKPDSLSEAGTRFRKNSSYFRVNYVCIVALILGFSLLAHPFSLILLLCLAASWLFLYLFRPSDRPLILFGRSFSEYETLGGLILSTIAVIFFTSVGSVLISALMIGIATICVHGAFRAPDDLFLDEQDHAASGFLSFIGVPAIPSVAPSASSAASPV.

5 helical membrane passes run 83-103 (SSYF…FSLL), 105-125 (HPFS…LYLF), 146-166 (GGLI…SVLI), 170-190 (MIGI…DLFL), and 196-216 (AASG…APSA).

It belongs to the PRA1 family. In terms of assembly, interacts with PRA1B1, PRA1B2, PRA1B3, PRA1B4, PRA1B6 and PRA1E. Expressed in roots, lateral roots, lateral root caps, columella cells, leaves, and shoot apex.

It localises to the endosome membrane. In terms of biological role, may be involved in both secretory and endocytic intracellular trafficking in the endosomal/prevacuolar compartments. This chain is PRA1 family protein B5 (PRA1B5), found in Arabidopsis thaliana (Mouse-ear cress).